The sequence spans 370 residues: Platelet-derived growth factor D (370 aa).

Positions Met-1 to Cys-18 are cleaved as a signal peptide. Residues Arg-52–Leu-170 form the CUB domain. Cysteines 109 and 131 form a disulfide. N-linked (GlcNAc...) asparagine glycosylation is present at Asn-276. Disulfide bonds link Cys-302/Cys-360 and Cys-306/Cys-362.

It belongs to the PDGF/VEGF growth factor family. In terms of assembly, homodimer; disulfide-linked. Interacts with PDGFRB homodimers, and with heterodimers formed by PDGFRA and PDGFRB. Activated by proteolytic cleavage. Proteolytic removal of the N-terminal CUB domain releasing the core domain is necessary for unmasking the receptor-binding epitopes of the core domain. Cleavage after Arg-247 or Arg-249 by urokinase plasminogen activator gives rise to the active form.

The protein resides in the secreted. In terms of biological role, growth factor that plays an essential role in the regulation of embryonic development, cell proliferation, cell migration, survival and chemotaxis. Potent mitogen for cells of mesenchymal origin. Plays an important role in wound healing. Induces macrophage recruitment, increased interstitial pressure, and blood vessel maturation during angiogenesis. Can initiate events that lead to a mesangial proliferative glomerulonephritis, including influx of monocytes and macrophages and production of extracellular matrix. The sequence is that of Platelet-derived growth factor D (PDGFD) from Pongo abelii (Sumatran orangutan).